Reading from the N-terminus, the 229-residue chain is Putative N-acetylmannosamine-6-phosphate 2-epimerase (229 aa).

This sequence belongs to the NanE family.

It catalyses the reaction an N-acyl-D-glucosamine 6-phosphate = an N-acyl-D-mannosamine 6-phosphate. It participates in amino-sugar metabolism; N-acetylneuraminate degradation; D-fructose 6-phosphate from N-acetylneuraminate: step 3/5. Functionally, converts N-acetylmannosamine-6-phosphate (ManNAc-6-P) to N-acetylglucosamine-6-phosphate (GlcNAc-6-P). This chain is Putative N-acetylmannosamine-6-phosphate 2-epimerase, found in Shigella sonnei (strain Ss046).